The sequence spans 90 residues: Small ribosomal subunit protein uS15c (90 aa).

The protein belongs to the universal ribosomal protein uS15 family. Part of the 30S ribosomal subunit.

The protein resides in the plastid. It is found in the chloroplast. The polypeptide is Small ribosomal subunit protein uS15c (rps15-A) (Hordeum vulgare (Barley)).